An 81-amino-acid chain; its full sequence is Sec-independent protein translocase protein TatA (81 aa).

A helical transmembrane segment spans residues 1–21 (MGGISIWQLLIVALIVILLFG). The interval 34–81 (GAVKGFKNAMTPEDENKSLDDKEKDQTAATSQQAAEKQPETESKDKQA) is disordered. 2 stretches are compositionally biased toward basic and acidic residues: residues 47–59 (DENK…EKDQ) and 70–81 (KQPETESKDKQA).

This sequence belongs to the TatA/E family. In terms of assembly, the Tat system comprises two distinct complexes: a TatABC complex, containing multiple copies of TatA, TatB and TatC subunits, and a separate TatA complex, containing only TatA subunits. Substrates initially bind to the TatABC complex, which probably triggers association of the separate TatA complex to form the active translocon.

The protein localises to the cell inner membrane. In terms of biological role, part of the twin-arginine translocation (Tat) system that transports large folded proteins containing a characteristic twin-arginine motif in their signal peptide across membranes. TatA could form the protein-conducting channel of the Tat system. The polypeptide is Sec-independent protein translocase protein TatA (Shewanella frigidimarina (strain NCIMB 400)).